Here is a 317-residue protein sequence, read N- to C-terminus: Endochitinase 3 (317 aa).

An N-terminal signal peptide occupies residues 1–19; the sequence is MFVRNALVVTGLLAALTQA. Residues N25, N49, and N169 are each glycosylated (N-linked (GlcNAc...) asparagine). The region spanning 29–317 is the GH18 domain; it reads HKLTVYWGAE…NYQKEIKANL (289 aa). The active-site Proton donor is the E170. N245 carries an N-linked (GlcNAc...) asparagine glycan.

It belongs to the glycosyl hydrolase 18 family. Chitinase class III subfamily.

The protein localises to the secreted. It carries out the reaction Random endo-hydrolysis of N-acetyl-beta-D-glucosaminide (1-&gt;4)-beta-linkages in chitin and chitodextrins.. Secreted chitinase involved in the degradation of chitin, a component of the cell walls of fungi and exoskeletal elements of some animals (including worms and arthropods). Participates in the infection process and directly acts in the penetration process of the host cuticle. Involved in heat-shock adaptation. The protein is Endochitinase 3 (chi3) of Metarhizium robertsii (strain ARSEF 23 / ATCC MYA-3075) (Metarhizium anisopliae (strain ARSEF 23)).